The primary structure comprises 315 residues: Small ribosomal subunit protein uS2 (315 aa).

The tract at residues 241–315 is disordered; that stretch reads AQHGEERRPG…QPAPGSDANR (75 aa). Over residues 243-288 the composition is skewed to basic and acidic residues; the sequence is HGEERRPGEEDRDAASERGQKDRRDRRDRRGGGRDRERREPREDRA.

It belongs to the universal ribosomal protein uS2 family.

This chain is Small ribosomal subunit protein uS2, found in Anaeromyxobacter sp. (strain Fw109-5).